Consider the following 188-residue polypeptide: MAITIPNREEILADWEAHPMRKPRIEKVTINIGVGESGERLTKAEIMLERLTGQKPIRRKAKKTNRDFGIRRGEPIAVKVTLRGPKAYEMLKRLLAAVDNRLKASSFDEHGNVCFGIDEHINIPGVEYDPEIGIFGMDVCVTLERPGFRVARRKRKRAKIPTRHKLTKEEGMVYMMEEFGVEIVEEEG.

The protein belongs to the universal ribosomal protein uL5 family. In terms of assembly, part of the 50S ribosomal subunit; contacts the 5S rRNA and probably tRNA. Forms a bridge to the 30S subunit in the 70S ribosome.

In terms of biological role, this is one of the proteins that bind and probably mediate the attachment of the 5S RNA into the large ribosomal subunit, where it forms part of the central protuberance. In the 70S ribosome it contacts protein S13 of the 30S subunit (bridge B1b), connecting the 2 subunits; this bridge is implicated in subunit movement. May contact the P site tRNA; the 5S rRNA and some of its associated proteins might help stabilize positioning of ribosome-bound tRNAs. This Pyrococcus abyssi (strain GE5 / Orsay) protein is Large ribosomal subunit protein uL5.